The following is an 86-amino-acid chain: Large ribosomal subunit protein uL10 (86 aa).

This sequence belongs to the universal ribosomal protein uL10 family. Part of the ribosomal stalk of the 50S ribosomal subunit. The N-terminus interacts with L11 and the large rRNA to form the base of the stalk. The C-terminus forms an elongated spine to which L12 dimers bind in a sequential fashion forming a multimeric L10(L12)X complex.

Functionally, forms part of the ribosomal stalk, playing a central role in the interaction of the ribosome with GTP-bound translation factors. This is Large ribosomal subunit protein uL10 (rplJ) from Serratia marcescens.